The primary structure comprises 222 residues: ER membrane protein complex subunit 7 homolog (222 aa).

The first 16 residues, 1–16, serve as a signal peptide directing secretion; that stretch reads MKSILLLFSLIVLGSA. The Extracellular segment spans residues 17-145; the sequence is TEEVSRTEQT…RKREEWRITD (129 aa). Residues 146 to 166 form a helical membrane-spanning segment; the sequence is MLFSPMVLMLVVPLVVMLILP. At 167-222 the chain is on the cytoplasmic side; the sequence is KMTANDPELKKEMENMQMPKVDMPDVGEMMANFFGGSAPAKKKAVTGGSGSGQRRK.

Belongs to the EMC7 family.

The protein localises to the membrane. The protein is ER membrane protein complex subunit 7 homolog of Caenorhabditis elegans.